We begin with the raw amino-acid sequence, 172 residues long: Peptide methionine sulfoxide reductase MsrA (172 aa).

The active site involves cysteine 14.

This sequence belongs to the MsrA Met sulfoxide reductase family.

The enzyme catalyses L-methionyl-[protein] + [thioredoxin]-disulfide + H2O = L-methionyl-(S)-S-oxide-[protein] + [thioredoxin]-dithiol. It catalyses the reaction [thioredoxin]-disulfide + L-methionine + H2O = L-methionine (S)-S-oxide + [thioredoxin]-dithiol. In terms of biological role, has an important function as a repair enzyme for proteins that have been inactivated by oxidation. Catalyzes the reversible oxidation-reduction of methionine sulfoxide in proteins to methionine. In Streptomyces coelicolor (strain ATCC BAA-471 / A3(2) / M145), this protein is Peptide methionine sulfoxide reductase MsrA.